Consider the following 829-residue polypeptide: Trimethylamine-N-oxide reductase (829 aa).

Positions 1–31 (MNRRDFLKGIASSSFVVLGGSSVLTPLNALA) form a signal peptide, tat-type signal. S180 contributes to the Mo-bis(molybdopterin guanine dinucleotide) binding site.

Belongs to the prokaryotic molybdopterin-containing oxidoreductase family. It depends on Mo-bis(molybdopterin guanine dinucleotide) as a cofactor. Post-translationally, predicted to be exported by the Tat system. The position of the signal peptide cleavage has been experimentally proven.

Its subcellular location is the periplasm. The enzyme catalyses trimethylamine + 2 Fe(III)-[cytochrome c] + H2O = trimethylamine N-oxide + 2 Fe(II)-[cytochrome c] + 3 H(+). In terms of biological role, reduces trimethylamine-N-oxide (TMAO) into trimethylamine; an anaerobic reaction coupled to energy-yielding reactions. The sequence is that of Trimethylamine-N-oxide reductase (torA) from Shewanella massilia.